A 443-amino-acid chain; its full sequence is D-serine dehydratase (443 aa).

Lysine 118 carries the post-translational modification N6-(pyridoxal phosphate)lysine.

The protein belongs to the serine/threonine dehydratase family. DsdA subfamily. Monomer. It depends on pyridoxal 5'-phosphate as a cofactor.

The catalysed reaction is D-serine = pyruvate + NH4(+). This Escherichia coli O17:K52:H18 (strain UMN026 / ExPEC) protein is D-serine dehydratase.